We begin with the raw amino-acid sequence, 58 residues long: Conotoxin TxXIIIA (58 aa).

The signal sequence occupies residues 1-22 (MRCLPVFVILLLLIASVPSVDA). A propeptide spanning residues 23–46 (ELKAKDDMPQASFHDNAERDQQKK) is cleaved from the precursor.

Homodimer; disulfide-linked. 5 disulfide bonds are present in each homodimer: two intrachain disulfide bonds per subunit, and one interchain disulfide bond linking the two subunits. In terms of tissue distribution, expressed by the venom duct.

The protein localises to the secreted. The chain is Conotoxin TxXIIIA from Conus textile (Cloth-of-gold cone).